We begin with the raw amino-acid sequence, 378 residues long: Glutamate 5-kinase (378 aa).

Lysine 20 is a binding site for ATP. Residues serine 60, aspartate 147, and asparagine 159 each contribute to the substrate site. Residues 179–180 (TD) and 221–227 (TGGMLTK) each bind ATP. The PUA domain maps to 286 to 364 (RGRVVLDDGA…SQIARILGSM (79 aa)).

Belongs to the glutamate 5-kinase family.

The protein localises to the cytoplasm. The catalysed reaction is L-glutamate + ATP = L-glutamyl 5-phosphate + ADP. It participates in amino-acid biosynthesis; L-proline biosynthesis; L-glutamate 5-semialdehyde from L-glutamate: step 1/2. In terms of biological role, catalyzes the transfer of a phosphate group to glutamate to form L-glutamate 5-phosphate. This Bordetella parapertussis (strain 12822 / ATCC BAA-587 / NCTC 13253) protein is Glutamate 5-kinase.